The following is a 187-amino-acid chain: Large ribosomal subunit protein bL32m (187 aa).

Zn(2+)-binding residues include cysteine 109, cysteine 112, cysteine 122, and cysteine 125.

The protein belongs to the bacterial ribosomal protein bL32 family. In terms of assembly, component of the mitochondrial ribosome large subunit (39S) which comprises a 16S rRNA and about 50 distinct proteins. MRPL32 precursor is processed by the m-AAA protease (composed of AFG3L2 and SPG7), which cleaves the N-terminal transit peptide. Cleavage by the m-AAA protease takes place prior to assembly into the large subunit, an essential step for mitochondrial ribosome (mitoribosome) assembly. Proper processing by the m-AAA protease is dependent on the zinc-binding region within the tightly folded C-terminal domain of MRPL32: zinc-dependent folding halts degradation initiated from the N-terminus and triggers the release of mature MRPL32.

The protein resides in the mitochondrion. In terms of biological role, component of the mitochondrial large ribosomal subunit (mt-LSU). The mitochondrial ribosome (mitoribosome) is a large ribonucleoprotein complex responsible for the synthesis of proteins inside mitochondria. This chain is Large ribosomal subunit protein bL32m (Mrpl32), found in Mus musculus (Mouse).